The following is a 27-amino-acid chain: GFGSFLGKALKAALKIGANALGGAPQQ.

As to expression, expressed by the skin glands.

Its subcellular location is the secreted. Functionally, antimicrobial peptide. In Xenopus ruwenzoriensis (Uganda clawed frog), this protein is Caerulein precursor fragment R5.